Here is a 600-residue protein sequence, read N- to C-terminus: Aspartate--tRNA(Asp/Asn) ligase (600 aa).

Glutamate 181 provides a ligand contact to L-aspartate. Positions 205 to 208 (QQYK) are aspartate. Arginine 227 serves as a coordination point for L-aspartate. Residues 227 to 229 (RDE) and glutamine 236 each bind ATP. Histidine 455 is an L-aspartate binding site. Glutamate 490 provides a ligand contact to ATP. Arginine 497 contributes to the L-aspartate binding site. Residue 542 to 545 (GLDR) coordinates ATP.

This sequence belongs to the class-II aminoacyl-tRNA synthetase family. Type 1 subfamily. In terms of assembly, homodimer.

The protein resides in the cytoplasm. It catalyses the reaction tRNA(Asx) + L-aspartate + ATP = L-aspartyl-tRNA(Asx) + AMP + diphosphate. In terms of biological role, aspartyl-tRNA synthetase with relaxed tRNA specificity since it is able to aspartylate not only its cognate tRNA(Asp) but also tRNA(Asn). Reaction proceeds in two steps: L-aspartate is first activated by ATP to form Asp-AMP and then transferred to the acceptor end of tRNA(Asp/Asn). The sequence is that of Aspartate--tRNA(Asp/Asn) ligase from Methylacidiphilum infernorum (isolate V4) (Methylokorus infernorum (strain V4)).